The sequence spans 186 residues: Intraflagellar transport protein 27 homolog (186 aa).

GTP is bound by residues 12 to 19, 64 to 68, and 123 to 126; these read GDPTVGKT, DSAGK, and NKTD.

It belongs to the small GTPase superfamily. Rab family. As to quaternary structure, component of the IFT complex B, at least composed of IFT20, IFT22, IFT25, IFT27, IFT46, IFT52, TRAF3IP1/IFT54, IFT57, IFT74, IFT80, IFT81, and IFT88. Interacts with IFT25. Interacts with IFT70B. Interacts with RABL2/RABL2A; binding is equal in the presence of GTP or GDP. Interacts with IFT88. Interacts with ARL6; recognizes and binds with the GTP-free form of ARL6.

It localises to the cell projection. It is found in the cilium. The protein resides in the cytoplasm. Its subcellular location is the flagellum. In terms of biological role, small GTPase-like component of the intraflagellar transport (IFT) complex B that promotes the exit of the BBSome complex from cilia via its interaction with ARL6. Not involved in entry of the BBSome complex into cilium. Prevents aggregation of GTP-free ARL6. Required for hedgehog signaling. Forms a subcomplex within the IFT complex B with IFT25. Its role in intraflagellar transport is mainly seen in tissues rich in ciliated cells such as kidney and testis. Essential for male fertility, spermiogenesis and sperm flagella formation. Plays a role in the early development of the kidney. May be involved in the regulation of ureteric bud initiation. This chain is Intraflagellar transport protein 27 homolog (IFT27), found in Bos taurus (Bovine).